The sequence spans 99 residues: Nucleoid-associated protein str1598 (99 aa).

The protein belongs to the YbaB/EbfC family. Homodimer.

The protein resides in the cytoplasm. It localises to the nucleoid. Functionally, binds to DNA and alters its conformation. May be involved in regulation of gene expression, nucleoid organization and DNA protection. The protein is Nucleoid-associated protein str1598 of Streptococcus thermophilus (strain CNRZ 1066).